The chain runs to 148 residues: Stathmin (148 aa).

The SLD domain maps to S4–A145. Residue S16 is modified to Phosphoserine; by PKA. S38 carries the phosphoserine; by CDK1 modification. Residues K41 to K140 adopt a coiled-coil conformation. Position 63 is a phosphoserine; by PKA (S63). Positions R122–N148 are disordered.

Belongs to the stathmin family. Binds to two alpha/beta-tubulin heterodimers. Post-translationally, many different phosphorylated forms are observed depending on specific combinations among the sites which can be phosphorylated. MAPK is responsible for the phosphorylation of stathmin in response to NGF.

The protein resides in the cytoplasm. It localises to the cytoskeleton. Its function is as follows. Involved in the regulation of the microtubule (MT) filament system by destabilizing microtubules. It prevents assembly and promotes disassembly of microtubules. The sequence is that of Stathmin (STMN1) from Gallus gallus (Chicken).